Reading from the N-terminus, the 120-residue chain is MDYEFLRDVTGQVIVRFSMGHEVIGHWINEELKGDFNLLDRIEAGAAEVKGSERQWQLEGHEYTLLMDGEEVMIRANLLEFEGEEMEEGMNYYDEESLSFCGVEDFLQVLKAYRSFMLKY.

It belongs to the UPF0231 family.

This Serratia proteamaculans (strain 568) protein is UPF0231 protein Spro_4007.